A 320-amino-acid polypeptide reads, in one-letter code: 1-aminocyclopropane-1-carboxylate oxidase 2 (320 aa).

The stretch at 111 to 143 forms a coiled coil; the sequence is DEYRTAMKDFGKRLENLAEDLLDLLCENLGLEK. Positions 156–256 constitute a Fe2OG dioxygenase domain; sequence PTFGTKVSNY…RMSVASFYNP (101 aa). Fe cation is bound by residues histidine 180, aspartate 182, and histidine 237. Arginine 247 lines the 2-oxoglutarate pocket.

It belongs to the iron/ascorbate-dependent oxidoreductase family. Requires Fe(2+) as cofactor. Cu(2+) serves as cofactor. Expressed in vegetative tissues. Constitutively expressed in leaves and blades. In ethylene exposed etiolated seedlings, localized in cells at the outer side of the exaggerated hook in an ethylene-dependent manner and following an ethylene sensitive pattern. Also detected in the root tip when treated by ethylene.

The enzyme catalyses 1-aminocyclopropane-1-carboxylate + L-ascorbate + O2 = ethene + L-dehydroascorbate + hydrogen cyanide + CO2 + 2 H2O. The protein operates within alkene biosynthesis; ethylene biosynthesis via S-adenosyl-L-methionine; ethylene from S-adenosyl-L-methionine: step 2/2. Its function is as follows. Enzyme involved in the ethylene biosynthesis. Required to mediate the 1-aminocyclopropane-1-carboxylic acid (ACC)-mediated reversion of the ABA-induced inhibition of seed germination via endosperm rupture. May promote stem elongation by maximizing the extensibility cells, possibly by activating ethylene biosynthesis, in response to very-long-chain fatty acids (VLCFAs C20:0 to C30:0). This Arabidopsis thaliana (Mouse-ear cress) protein is 1-aminocyclopropane-1-carboxylate oxidase 2 (ACO2).